The primary structure comprises 92 residues: Secreted RxLR effector protein RXLR-C02 (92 aa).

The N-terminal stretch at 1–21 (MQFHLLVMTTIAASFAATGSA) is a signal peptide. A RxLR motif is present at residues 48–51 (RALR). Residues 54 to 75 (ENRGLIGDDSDSSISDSDSEAK) are disordered.

It belongs to the RxLR effector family.

Its subcellular location is the secreted. It localises to the host cytoplasm. It is found in the host nucleus. Secreted effector that suppresses pattern-triggered immunity (PTI) in plant host. The polypeptide is Secreted RxLR effector protein RXLR-C02 (Plasmopara halstedii (Downy mildew of sunflower)).